A 534-amino-acid chain; its full sequence is Peptide chain release factor 3 (534 aa).

The 270-residue stretch at 9–278 folds into the tr-type G domain; that stretch reads ARRRTFAIIS…FFVEHAPPPQ (270 aa). Residues 18 to 25, 86 to 90, and 140 to 143 each bind GTP; these read SHPDAGKT, DTPGH, and NKLD.

This sequence belongs to the TRAFAC class translation factor GTPase superfamily. Classic translation factor GTPase family. PrfC subfamily.

Its subcellular location is the cytoplasm. Functionally, increases the formation of ribosomal termination complexes and stimulates activities of RF-1 and RF-2. It binds guanine nucleotides and has strong preference for UGA stop codons. It may interact directly with the ribosome. The stimulation of RF-1 and RF-2 is significantly reduced by GTP and GDP, but not by GMP. The protein is Peptide chain release factor 3 of Xanthomonas euvesicatoria pv. vesicatoria (strain 85-10) (Xanthomonas campestris pv. vesicatoria).